The following is a 741-amino-acid chain: 1,4-alpha-glucan branching enzyme GlgB 2 (741 aa).

The segment at 1–38 (MALRDTSIPEPSGPVPPAPGACATAPPLDPTDRGRLLA) is disordered. Residue Asp421 is the Nucleophile of the active site. The Proton donor role is filled by Glu474.

Belongs to the glycosyl hydrolase 13 family. GlgB subfamily. As to quaternary structure, monomer.

The catalysed reaction is Transfers a segment of a (1-&gt;4)-alpha-D-glucan chain to a primary hydroxy group in a similar glucan chain.. It functions in the pathway glycan biosynthesis; glycogen biosynthesis. Catalyzes the formation of the alpha-1,6-glucosidic linkages in glycogen by scission of a 1,4-alpha-linked oligosaccharide from growing alpha-1,4-glucan chains and the subsequent attachment of the oligosaccharide to the alpha-1,6 position. In Streptomyces coelicolor (strain ATCC BAA-471 / A3(2) / M145), this protein is 1,4-alpha-glucan branching enzyme GlgB 2 (glgB2).